Consider the following 448-residue polypeptide: Antilisterial bacteriocin subtilosin biosynthesis protein AlbA (448 aa).

In terms of domain architecture, Radical SAM core spans 115-329; that stretch reads FPMPLHATFE…EQHVIDEFKD (215 aa). Residues cysteine 129, cysteine 133, cysteine 136, cysteine 408, cysteine 414, and cysteine 417 each contribute to the [4Fe-4S] cluster site.

It depends on [4Fe-4S] cluster as a cofactor.

The protein resides in the cytoplasm. In terms of biological role, catalyzes the formation of 3 thioether bonds during production of the sactipeptide subtilosin from SboA. In vitro the thioether bonds cannot be made in the absence of the SboA propeptide, suggesting this is the first reaction in subtilosin maturation. In vitro, in the absence of a second substrate, cleaves S-adenosyl-L-methionine into Met and 5'-dA. This chain is Antilisterial bacteriocin subtilosin biosynthesis protein AlbA (albA), found in Bacillus subtilis (strain 168).